A 446-amino-acid polypeptide reads, in one-letter code: Packaging protein 1 (446 aa).

The segment at 1–72 is disordered; sequence MEEKAGLRHL…SQVSKSKKQR (72 aa). Polar residues predominate over residues 10–21; sequence LQNQQNEPSQDP. Positions 32–43 are enriched in basic and acidic residues; sequence HSDRNHLNKEAE. 170–177 is an ATP binding site; the sequence is GPTGCGKS. Residues 439–446 are DNA-binding; sequence RYYHSKKK.

The protein belongs to the adenoviridae packaging protein 1 family. In terms of assembly, homodimer. Part of a genome packaging complex composed of packaging proteins 1, 2 and 3; this complex specifically binds to the packaging sequence on the left end of viral genomic DNA and performs packaging of the viral genome. Interacts with protein 33K.

The protein resides in the virion. It localises to the host nucleus. The protein localises to the host nucleoplasm. It is found in the host nucleolus. Functionally, component of the packaging machinery which encapsidates the viral DNA into preformed capsids and transcriptional activator of the viral major late promoter (MLP). Binds, along with packaging proteins 2 and 3, to the specific packaging sequence on the left end of viral genomic DNA and displays ATPase activity thereby providing the power stroke of the packaging machinery. The activity of packaging protein IVa2 is stimulated by protein 33K which acts as a terminase. May be the protein that pumps DNA into the capsid powered by ATP hydrolysis. Specifically binds to the 5'-CG-3' nucleotides of the repeats making up the packaging sequence. Component of the DEF-A and DEF-B transcription factors that bind downstream elements of the major late promoter (MLP), and stimulate transcription from the MLP after initiation of viral DNA replication. DEF-A is a heterodimer packaging proteins 1 and 2 and DEF-B is a homodimer of packaging protein 1. The chain is Packaging protein 1 from Canine adenovirus serotype 1 (strain CLL) (CAdV-1).